The sequence spans 327 residues: GMP reductase (327 aa).

C175 serves as the catalytic Thioimidate intermediate. Position 204–227 (204–227) interacts with NADP(+); it reads IIADGGIRTNGDVAKSIRFGATMV.

It belongs to the IMPDH/GMPR family. GuaC type 2 subfamily.

The catalysed reaction is IMP + NH4(+) + NADP(+) = GMP + NADPH + 2 H(+). Catalyzes the irreversible NADPH-dependent deamination of GMP to IMP. It functions in the conversion of nucleobase, nucleoside and nucleotide derivatives of G to A nucleotides, and in maintaining the intracellular balance of A and G nucleotides. In Bacillus cereus (strain ZK / E33L), this protein is GMP reductase.